The primary structure comprises 430 residues: Probable dual-specificity RNA methyltransferase RlmN (430 aa).

Catalysis depends on Glu125, which acts as the Proton acceptor. Residues 152-395 enclose the Radical SAM core domain; sequence RHGRVTLCVS…VTVRDTRGRE (244 aa). An intrachain disulfide couples Cys159 to Cys400. Residues Cys166, Cys170, and Cys173 each contribute to the [4Fe-4S] cluster site. S-adenosyl-L-methionine contacts are provided by residues 221–222, Ser255, 278–280, and Asn357; these read GE and SLH. The active-site S-methylcysteine intermediate is Cys400.

Belongs to the radical SAM superfamily. RlmN family. [4Fe-4S] cluster serves as cofactor.

It localises to the cytoplasm. The catalysed reaction is adenosine(2503) in 23S rRNA + 2 reduced [2Fe-2S]-[ferredoxin] + 2 S-adenosyl-L-methionine = 2-methyladenosine(2503) in 23S rRNA + 5'-deoxyadenosine + L-methionine + 2 oxidized [2Fe-2S]-[ferredoxin] + S-adenosyl-L-homocysteine. The enzyme catalyses adenosine(37) in tRNA + 2 reduced [2Fe-2S]-[ferredoxin] + 2 S-adenosyl-L-methionine = 2-methyladenosine(37) in tRNA + 5'-deoxyadenosine + L-methionine + 2 oxidized [2Fe-2S]-[ferredoxin] + S-adenosyl-L-homocysteine. Specifically methylates position 2 of adenine 2503 in 23S rRNA and position 2 of adenine 37 in tRNAs. In Acidothermus cellulolyticus (strain ATCC 43068 / DSM 8971 / 11B), this protein is Probable dual-specificity RNA methyltransferase RlmN.